Consider the following 208-residue polypeptide: dTTP/UTP pyrophosphatase (208 aa).

Residues 28–48 (DRIHPADIDETPQRAEHPRSL) are disordered. The active-site Proton acceptor is D79.

This sequence belongs to the Maf family. YhdE subfamily. It depends on a divalent metal cation as a cofactor.

It localises to the cytoplasm. The catalysed reaction is dTTP + H2O = dTMP + diphosphate + H(+). It carries out the reaction UTP + H2O = UMP + diphosphate + H(+). Nucleoside triphosphate pyrophosphatase that hydrolyzes dTTP and UTP. May have a dual role in cell division arrest and in preventing the incorporation of modified nucleotides into cellular nucleic acids. This is dTTP/UTP pyrophosphatase from Brucella abortus (strain 2308).